Consider the following 505-residue polypeptide: Cobyric acid synthase (505 aa).

The 194-residue stretch at 260–453 folds into the GATase cobBQ-type domain; that stretch reads RIAVAAIYFP…FHGIIDEPEV (194 aa). Cys-341 serves as the catalytic Nucleophile. Residue His-445 is part of the active site.

It belongs to the CobB/CobQ family. CobQ subfamily.

It functions in the pathway cofactor biosynthesis; adenosylcobalamin biosynthesis. Its function is as follows. Catalyzes amidations at positions B, D, E, and G on adenosylcobyrinic A,C-diamide. NH(2) groups are provided by glutamine, and one molecule of ATP is hydrogenolyzed for each amidation. This is Cobyric acid synthase from Chlorobium phaeobacteroides (strain DSM 266 / SMG 266 / 2430).